The sequence spans 534 residues: Blue-light-activated protein (534 aa).

Positions 20–93 (GKDIFFAAVE…QSIRDAIAQR (74 aa)) constitute a PAS domain. C70 carries the S-4a-FMN cysteine modification. Residues 94-148 (NDISAEIINYRKDGSSFWNALFISPVYNDAGDLIYFFASQLDISRRKDAEEALRQ) form the PAC domain. Positions 161–390 (GIAHDFNNLL…TLRLYFPVDE (230 aa)) constitute a Histidine kinase domain. At H164 the chain carries Phosphohistidine; by autocatalysis. The region spanning 411 to 527 (RILIVEDRPD…DLARKVRQVL (117 aa)) is the Response regulatory domain. D461 carries the post-translational modification 4-aspartylphosphate.

FMN binds covalently to cysteine after exposure to blue light and this bond is spontaneously broken in the dark.

The catalysed reaction is ATP + protein L-histidine = ADP + protein N-phospho-L-histidine.. Photosensitive kinase and response regulator that is involved in increased bacterial virulence upon exposure to light. The protein is Blue-light-activated protein of Pseudomonas syringae pv. tomato (strain ATCC BAA-871 / DC3000).